The chain runs to 114 residues: T cell receptor alpha variable 12-3 (114 aa).

The N-terminal stretch at 1–21 (MMKSLRVLLVILWLQLSWVWS) is a signal peptide. In terms of domain architecture, Ig-like spans 24 to 114 (KEVEQDPGPL…DSATYLCAMS (91 aa)). Asn-44 carries an N-linked (GlcNAc...) asparagine glycan. Cysteines 45 and 111 form a disulfide.

As to quaternary structure, alpha-beta TR is a heterodimer composed of an alpha and beta chain; disulfide-linked. The alpha-beta TR is associated with the transmembrane signaling CD3 coreceptor proteins to form the TR-CD3 (TcR or TCR). The assembly of alpha-beta TR heterodimers with CD3 occurs in the endoplasmic reticulum where a single alpha-beta TR heterodimer associates with one CD3D-CD3E heterodimer, one CD3G-CD3E heterodimer and one CD247 homodimer forming a stable octameric structure. CD3D-CD3E and CD3G-CD3E heterodimers preferentially associate with TR alpha and TR beta chains, respectively. The association of the CD247 homodimer is the last step of TcR assembly in the endoplasmic reticulum and is required for transport to the cell surface.

It is found in the cell membrane. Functionally, v region of the variable domain of T cell receptor (TR) alpha chain that participates in the antigen recognition. Alpha-beta T cell receptors are antigen specific receptors which are essential to the immune response and are present on the cell surface of T lymphocytes. Recognize peptide-major histocompatibility (MH) (pMH) complexes that are displayed by antigen presenting cells (APC), a prerequisite for efficient T cell adaptive immunity against pathogens. Binding of alpha-beta TR to pMH complex initiates TR-CD3 clustering on the cell surface and intracellular activation of LCK that phosphorylates the ITAM motifs of CD3G, CD3D, CD3E and CD247 enabling the recruitment of ZAP70. In turn ZAP70 phosphorylates LAT, which recruits numerous signaling molecules to form the LAT signalosome. The LAT signalosome propagates signal branching to three major signaling pathways, the calcium, the mitogen-activated protein kinase (MAPK) kinase and the nuclear factor NF-kappa-B (NF-kB) pathways, leading to the mobilization of transcription factors that are critical for gene expression and essential for T cell growth and differentiation. The T cell repertoire is generated in the thymus, by V-(D)-J rearrangement. This repertoire is then shaped by intrathymic selection events to generate a peripheral T cell pool of self-MH restricted, non-autoaggressive T cells. Post-thymic interaction of alpha-beta TR with the pMH complexes shapes TR structural and functional avidity. The chain is T cell receptor alpha variable 12-3 from Homo sapiens (Human).